Reading from the N-terminus, the 178-residue chain is Photosystem I assembly protein Ycf4 (178 aa).

2 helical membrane passes run 19-39 and 61-81; these read ILVA…SLSS and LVMG…WAVI.

Belongs to the Ycf4 family.

The protein localises to the cellular thylakoid membrane. Its function is as follows. Seems to be required for the assembly of the photosystem I complex. The polypeptide is Photosystem I assembly protein Ycf4 (Synechococcus sp. (strain WH7803)).